Consider the following 207-residue polypeptide: Ribosomal RNA small subunit methyltransferase G (207 aa).

S-adenosyl-L-methionine is bound by residues Gly-73, Leu-78, 124 to 125 (VE), and Arg-139.

Belongs to the methyltransferase superfamily. RNA methyltransferase RsmG family.

The protein resides in the cytoplasm. The enzyme catalyses guanosine(527) in 16S rRNA + S-adenosyl-L-methionine = N(7)-methylguanosine(527) in 16S rRNA + S-adenosyl-L-homocysteine. Functionally, specifically methylates the N7 position of guanine in position 527 of 16S rRNA. The polypeptide is Ribosomal RNA small subunit methyltransferase G (Escherichia coli (strain SMS-3-5 / SECEC)).